A 220-amino-acid chain; its full sequence is Protein-L-isoaspartate O-methyltransferase (220 aa).

The active site involves S68.

It belongs to the methyltransferase superfamily. L-isoaspartyl/D-aspartyl protein methyltransferase family.

It is found in the cytoplasm. It carries out the reaction [protein]-L-isoaspartate + S-adenosyl-L-methionine = [protein]-L-isoaspartate alpha-methyl ester + S-adenosyl-L-homocysteine. Catalyzes the methyl esterification of L-isoaspartyl residues in peptides and proteins that result from spontaneous decomposition of normal L-aspartyl and L-asparaginyl residues. It plays a role in the repair and/or degradation of damaged proteins. This chain is Protein-L-isoaspartate O-methyltransferase, found in Dictyoglomus thermophilum (strain ATCC 35947 / DSM 3960 / H-6-12).